A 250-amino-acid polypeptide reads, in one-letter code: MTPFRRPTVLGTSASAPFPPAEAALTDPDGLLAVGGDLSPQRLLNAYAHGIFPWYSEGQPILWWSPDPRMVFRTDGVRLSSRFKRQLRASTWTVRADTAFEQVIDACAASPRPGQDGTWITAEMQQAYIALHRLGHAHSIEVFDGARLVGGIYGVAIGRMFFGESMFSGESGGSKVALAALAANLHGRGWPLIDAQVENPHLLSLGAERLPRADFLHQVQRQVALTEPPGSWSARYGEHAASGLCETRLT.

The disordered stretch occupies residues 1–21 (MTPFRRPTVLGTSASAPFPPA).

Belongs to the L/F-transferase family.

Its subcellular location is the cytoplasm. The enzyme catalyses N-terminal L-lysyl-[protein] + L-leucyl-tRNA(Leu) = N-terminal L-leucyl-L-lysyl-[protein] + tRNA(Leu) + H(+). The catalysed reaction is N-terminal L-arginyl-[protein] + L-leucyl-tRNA(Leu) = N-terminal L-leucyl-L-arginyl-[protein] + tRNA(Leu) + H(+). It catalyses the reaction L-phenylalanyl-tRNA(Phe) + an N-terminal L-alpha-aminoacyl-[protein] = an N-terminal L-phenylalanyl-L-alpha-aminoacyl-[protein] + tRNA(Phe). Functions in the N-end rule pathway of protein degradation where it conjugates Leu, Phe and, less efficiently, Met from aminoacyl-tRNAs to the N-termini of proteins containing an N-terminal arginine or lysine. The polypeptide is Leucyl/phenylalanyl-tRNA--protein transferase (Xanthomonas euvesicatoria pv. vesicatoria (strain 85-10) (Xanthomonas campestris pv. vesicatoria)).